We begin with the raw amino-acid sequence, 748 residues long: Bifunctional lysine-specific demethylase and histidyl-hydroxylase NO66 (748 aa).

Disordered regions lie at residues 65–135 (NIDR…RSTY) and 160–264 (TEVV…DDEG). Residues 94–110 (LENKKPKVEVKKEDEKS) are compositionally biased toward basic and acidic residues. A compositionally biased stretch (polar residues) spans 124–134 (LVQNETSTRST). Over residues 163–193 (VESDDEQMIGLDSDEELEDEDETDIDEDEMM) the composition is skewed to acidic residues. Residues 194-203 (IDPKDIERYI) are compositionally biased toward basic and acidic residues. Residues 207–264 (SVEDEEDMEDEEIEDEEFEDEEFEDEEEEADEQEEEEEDVSDEESVVSEMDADSDDEG) are compositionally biased toward acidic residues. A JmjC domain is found at 399–543 (QLVNPQTYDD…NLMEKVVPEA (145 aa)). Residues H442, D444, and H509 each coordinate Fe cation.

The protein belongs to the ROX family. NO66 subfamily. Fe(2+) is required as a cofactor.

The protein resides in the nucleus. The catalysed reaction is N(6),N(6)-dimethyl-L-lysyl(36)-[histone H3] + 2 2-oxoglutarate + 2 O2 = L-lysyl(36)-[histone H3] + 2 formaldehyde + 2 succinate + 2 CO2. Functionally, oxygenase that can act as both a histone lysine demethylase and a ribosomal histidine hydroxylase. Specifically demethylates 'Lys-4' (H3K4me) and 'Lys-36' (H3K36me) of histone H3, thereby playing a central role in histone code. Mediates response to multiple stress stimuli, including heat shock and osmotic, oxidative, and ethanol stress. The chain is Bifunctional lysine-specific demethylase and histidyl-hydroxylase NO66 (jmjc-1) from Caenorhabditis elegans.